The sequence spans 333 residues: Protoheme IX farnesyltransferase (333 aa).

8 helical membrane passes run L63–I83, A109–V129, L132–L152, I160–G180, W188–L208, A214–S234, G245–F265, and W292–A312.

It belongs to the UbiA prenyltransferase family. Protoheme IX farnesyltransferase subfamily.

Its subcellular location is the cell inner membrane. The catalysed reaction is heme b + (2E,6E)-farnesyl diphosphate + H2O = Fe(II)-heme o + diphosphate. It participates in porphyrin-containing compound metabolism; heme O biosynthesis; heme O from protoheme: step 1/1. Converts heme B (protoheme IX) to heme O by substitution of the vinyl group on carbon 2 of heme B porphyrin ring with a hydroxyethyl farnesyl side group. This Prochlorococcus marinus (strain MIT 9313) protein is Protoheme IX farnesyltransferase.